The following is a 270-amino-acid chain: Flavin-dependent thymidylate synthase (270 aa).

The ThyX domain maps to G13 to H218. FAD-binding positions include S59, R82–R84, and E90. DUMP contacts are provided by residues Q79–R82, E90–R94, and R157. The ThyX motif motif lies at R82 to S92. FAD contacts are provided by residues D173–H175 and H179. Position 184 (R184) interacts with dUMP. R184 serves as the catalytic Involved in ionization of N3 of dUMP, leading to its activation.

Belongs to the thymidylate synthase ThyX family. As to quaternary structure, homotetramer. It depends on FAD as a cofactor.

It catalyses the reaction dUMP + (6R)-5,10-methylene-5,6,7,8-tetrahydrofolate + NADPH + H(+) = dTMP + (6S)-5,6,7,8-tetrahydrofolate + NADP(+). It functions in the pathway pyrimidine metabolism; dTTP biosynthesis. Its function is as follows. Catalyzes the reductive methylation of 2'-deoxyuridine-5'-monophosphate (dUMP) to 2'-deoxythymidine-5'-monophosphate (dTMP) while utilizing 5,10-methylenetetrahydrofolate (mTHF) as the methyl donor, and NADPH and FADH(2) as the reductant. The chain is Flavin-dependent thymidylate synthase from Thermus thermophilus (strain ATCC 27634 / DSM 579 / HB8).